The sequence spans 189 residues: 3-isopropylmalate dehydratase small subunit (189 aa).

The protein belongs to the LeuD family. LeuD type 1 subfamily. As to quaternary structure, heterodimer of LeuC and LeuD.

The enzyme catalyses (2R,3S)-3-isopropylmalate = (2S)-2-isopropylmalate. It functions in the pathway amino-acid biosynthesis; L-leucine biosynthesis; L-leucine from 3-methyl-2-oxobutanoate: step 2/4. Catalyzes the isomerization between 2-isopropylmalate and 3-isopropylmalate, via the formation of 2-isopropylmaleate. This Francisella tularensis subsp. holarctica (strain FTNF002-00 / FTA) protein is 3-isopropylmalate dehydratase small subunit.